We begin with the raw amino-acid sequence, 424 residues long: DNA repair protein Rad60 (424 aa).

Tyrosine 26 is subject to Phosphotyrosine. Serine 32 and serine 34 each carry phosphoserine. The interval 45–177 (LPKKSTKTGK…LTTTTSNSAS (133 aa)) is disordered. The segment covering 48 to 57 (KSTKTGKRKN) has biased composition (basic residues). The segment covering 77–93 (QAEHKAVEPEEDMRTER) has biased composition (basic and acidic residues). Serine 96 carries the post-translational modification Phosphoserine. Residues 104–123 (EMEKKNGQQSDVEKHAKEND) show a composition bias toward basic and acidic residues. Residues 156–166 (KPKKRGQKKRT) are compositionally biased toward basic residues. Residues 167-177 (SLTTTTSNSAS) show a composition bias toward low complexity.

In terms of assembly, forms a complex with dgrn; likely required for localization to the nuclear periphery. Interacts with the SMC5-SMC6 complex members SMC5 and SMC6/jnj following ionizing radiation (IR) to induce DNA damage. Interaction between the SMC5-SMC6 complex and the dgrn-Rad60 complex, may stabilize the association of heterochromatic DSBs with the nuclear periphery.

Its subcellular location is the nucleus. The protein resides in the nucleoplasm. In terms of biological role, required for repair of DNA double strand breaks which occur during replication or are induced by ionizing radiation (IR). Functions with dgrn and downstream of the SMC5-SMC6 complex to regulate strand break repair. Likely functions by stabilizing the association of heterochromatic double strand breaks (DSBs) with the nuclear periphery as part of the homologous recombination (HR) repair process. This Drosophila melanogaster (Fruit fly) protein is DNA repair protein Rad60.